Here is a 499-residue protein sequence, read N- to C-terminus: Tektin-like protein 1 (499 aa).

2 coiled-coil regions span residues Ser197 to Leu227 and Leu297 to Asn317. Phosphotyrosine is present on Tyr372.

As to quaternary structure, microtubule inner protein component of sperm flagellar doublet microtubules.

The protein resides in the cytoplasm. It is found in the cytoskeleton. It localises to the flagellum axoneme. Functionally, microtubule inner protein (MIP) part of the dynein-decorated doublet microtubules (DMTs) in sperm flagellar axoneme, which is required for motile flagellum beating. Forms an extensive interaction network cross-linking the lumen of axonemal doublet microtubules. In Homo sapiens (Human), this protein is Tektin-like protein 1.